We begin with the raw amino-acid sequence, 247 residues long: Ribosomal RNA small subunit methyltransferase J (247 aa).

Residues 101 to 102 (RD), 117 to 118 (ER), 153 to 154 (SS), and Asp-171 contribute to the S-adenosyl-L-methionine site.

Belongs to the methyltransferase superfamily. RsmJ family.

The protein localises to the cytoplasm. It carries out the reaction guanosine(1516) in 16S rRNA + S-adenosyl-L-methionine = N(2)-methylguanosine(1516) in 16S rRNA + S-adenosyl-L-homocysteine + H(+). Specifically methylates the guanosine in position 1516 of 16S rRNA. In Photorhabdus laumondii subsp. laumondii (strain DSM 15139 / CIP 105565 / TT01) (Photorhabdus luminescens subsp. laumondii), this protein is Ribosomal RNA small subunit methyltransferase J.